The following is a 402-amino-acid chain: Prophage integrase IntZ (402 aa).

The Core-binding (CB) domain maps to 103 to 183; sequence AGFKKVAEDW…RIGEIFKFAV (81 aa). The 176-residue stretch at 206–381 folds into the Tyr recombinase domain; that stretch reads GHNAWIPISE…AYLKQRRAMM (176 aa). Catalysis depends on residues Arg-244, Lys-271, His-332, Arg-335, and His-359. Tyr-368 (O-(3'-phospho-DNA)-tyrosine intermediate) is an active-site residue.

It belongs to the 'phage' integrase family.

Its function is as follows. Integrase is necessary for integration of the phage into the host genome by site-specific recombination. In conjunction with excisionase, integrase is also necessary for excision of the prophage from the host genome. The chain is Prophage integrase IntZ (intZ) from Escherichia coli (strain K12).